A 262-amino-acid polypeptide reads, in one-letter code: MIDKSAFIHPTAIVEDGAVIGANAHIGPFCIVGPQVEIGEGTVLKSHVVVNGQTKIGRDNEIYQFASIGEVNQDLKYAGEPTRVEIGDRNRIRESVTIHRGTVQGGGLTKVGSDNLLMINAHVAHDCTVGNRCILANNATLAGHVSVDDFAIIGGMTAVHQFCIIGAHVMVGGCSGVAQDVPPYVVAQGNHATPFGVNIEGLKRRGFSREGLVAIRNAYKLLYRSGKTLDEAKLEIAELAEKHPEVKAFTEFFERSTRGPIR.

The protein belongs to the transferase hexapeptide repeat family. LpxA subfamily. In terms of assembly, homotrimer.

It localises to the cytoplasm. It catalyses the reaction a (3R)-hydroxyacyl-[ACP] + UDP-N-acetyl-alpha-D-glucosamine = a UDP-3-O-[(3R)-3-hydroxyacyl]-N-acetyl-alpha-D-glucosamine + holo-[ACP]. It functions in the pathway glycolipid biosynthesis; lipid IV(A) biosynthesis; lipid IV(A) from (3R)-3-hydroxytetradecanoyl-[acyl-carrier-protein] and UDP-N-acetyl-alpha-D-glucosamine: step 1/6. In terms of biological role, involved in the biosynthesis of lipid A, a phosphorylated glycolipid that anchors the lipopolysaccharide to the outer membrane of the cell. The polypeptide is Acyl-[acyl-carrier-protein]--UDP-N-acetylglucosamine O-acyltransferase (Salmonella heidelberg (strain SL476)).